The chain runs to 385 residues: GTPase Obg (385 aa).

Positions 1–159 constitute an Obg domain; it reads MKFVDEVEIR…RNLKLELLLL (159 aa). Positions 160–333 constitute an OBG-type G domain; it reads ADVGLLGLPN…LIHDVMTLLE (174 aa). GTP is bound by residues 166 to 173, 191 to 195, 213 to 216, 283 to 286, and 314 to 316; these read GLPNAGKS, FTTLI, DIPG, NKID, and SAI. Residues Ser-173 and Thr-193 each coordinate Mg(2+).

This sequence belongs to the TRAFAC class OBG-HflX-like GTPase superfamily. OBG GTPase family. In terms of assembly, monomer. Mg(2+) is required as a cofactor.

It is found in the cytoplasm. Functionally, an essential GTPase which binds GTP, GDP and possibly (p)ppGpp with moderate affinity, with high nucleotide exchange rates and a fairly low GTP hydrolysis rate. Plays a role in control of the cell cycle, stress response, ribosome biogenesis and in those bacteria that undergo differentiation, in morphogenesis control. This Pseudoalteromonas translucida (strain TAC 125) protein is GTPase Obg.